The following is a 374-amino-acid chain: Probable dual-specificity RNA methyltransferase RlmN (374 aa).

The segment covering 1–17 (MEKNEISEERRTQEKEK) has biased composition (basic and acidic residues). The disordered stretch occupies residues 1–22 (MEKNEISEERRTQEKEKQHGHR). Glutamate 119 serves as the catalytic Proton acceptor. Residues 125–360 (SEERITACIS…VTVRKSQGAT (236 aa)) enclose the Radical SAM core domain. A disulfide bridge links cysteine 132 with cysteine 365. Residues cysteine 139, cysteine 143, and cysteine 146 each contribute to the [4Fe-4S] cluster site. Residues 190-191 (GE), serine 223, 246-248 (SLH), and asparagine 322 contribute to the S-adenosyl-L-methionine site. Cysteine 365 (S-methylcysteine intermediate) is an active-site residue.

This sequence belongs to the radical SAM superfamily. RlmN family. The cofactor is [4Fe-4S] cluster.

The protein resides in the cytoplasm. It catalyses the reaction adenosine(2503) in 23S rRNA + 2 reduced [2Fe-2S]-[ferredoxin] + 2 S-adenosyl-L-methionine = 2-methyladenosine(2503) in 23S rRNA + 5'-deoxyadenosine + L-methionine + 2 oxidized [2Fe-2S]-[ferredoxin] + S-adenosyl-L-homocysteine. The enzyme catalyses adenosine(37) in tRNA + 2 reduced [2Fe-2S]-[ferredoxin] + 2 S-adenosyl-L-methionine = 2-methyladenosine(37) in tRNA + 5'-deoxyadenosine + L-methionine + 2 oxidized [2Fe-2S]-[ferredoxin] + S-adenosyl-L-homocysteine. Functionally, specifically methylates position 2 of adenine 2503 in 23S rRNA and position 2 of adenine 37 in tRNAs. This chain is Probable dual-specificity RNA methyltransferase RlmN, found in Chlorobaculum tepidum (strain ATCC 49652 / DSM 12025 / NBRC 103806 / TLS) (Chlorobium tepidum).